A 468-amino-acid polypeptide reads, in one-letter code: 23S rRNA (uracil(1939)-C(5))-methyltransferase RlmD (468 aa).

The TRAM domain maps to 12 to 70; it reads SKQLSPKLSLNVTQLDHLGAGMAQHQGKVVFIPQALPGERVSVQLTDQKKSFAKAKLIK. Positions 83, 89, 92, and 174 each coordinate [4Fe-4S] cluster. Residues glutamine 296, phenylalanine 325, asparagine 330, glutamate 351, aspartate 378, and aspartate 398 each contribute to the S-adenosyl-L-methionine site. Cysteine 424 functions as the Nucleophile in the catalytic mechanism.

This sequence belongs to the class I-like SAM-binding methyltransferase superfamily. RNA M5U methyltransferase family. RlmD subfamily.

The catalysed reaction is uridine(1939) in 23S rRNA + S-adenosyl-L-methionine = 5-methyluridine(1939) in 23S rRNA + S-adenosyl-L-homocysteine + H(+). Functionally, catalyzes the formation of 5-methyl-uridine at position 1939 (m5U1939) in 23S rRNA. The protein is 23S rRNA (uracil(1939)-C(5))-methyltransferase RlmD of Shewanella denitrificans (strain OS217 / ATCC BAA-1090 / DSM 15013).